The chain runs to 259 residues: Global transcriptional regulator CodY (259 aa).

The tract at residues 1–155 (MELLAKTRKL…SSTVVGMEIL (155 aa)) is GAF domain. The segment at residues 203–222 (ASKIADRVGITRSVIVNALR) is a DNA-binding region (H-T-H motif). S215 bears the Phosphoserine mark.

This sequence belongs to the CodY family.

The protein localises to the cytoplasm. Functionally, DNA-binding global transcriptional regulator which is involved in the adaptive response to starvation and acts by directly or indirectly controlling the expression of numerous genes in response to nutrient availability. During rapid exponential growth, CodY is highly active and represses genes whose products allow adaptation to nutrient depletion. This chain is Global transcriptional regulator CodY, found in Bacillus mycoides (strain KBAB4) (Bacillus weihenstephanensis).